We begin with the raw amino-acid sequence, 523 residues long: UDP-glucuronosyltransferase 3A1 (523 aa).

The N-terminal stretch at 1–22 (MVGQRVLLLVAFLLSGVLLSEA) is a signal peptide. Over 23-483 (AKILTISTLG…YAFQQPWHEQ (461 aa)) the chain is Extracellular. Residue N52 is glycosylated (N-linked (GlcNAc...) asparagine). A helical membrane pass occupies residues 484–504 (YLIDVFVFLLGLTLGTMWLCG). Topologically, residues 505–523 (KLLGVVARWLRGARKVKKT) are cytoplasmic.

The protein belongs to the UDP-glycosyltransferase family.

The protein resides in the membrane. It carries out the reaction glucuronate acceptor + UDP-alpha-D-glucuronate = acceptor beta-D-glucuronoside + UDP + H(+). Its function is as follows. UDP-glucuronosyltransferases catalyze phase II biotransformation reactions in which lipophilic substrates are conjugated with glucuronic acid to increase water solubility and enhance excretion. They are of major importance in the conjugation and subsequent elimination of potentially toxic xenobiotics and endogenous compounds. The polypeptide is UDP-glucuronosyltransferase 3A1 (UGT3A1) (Homo sapiens (Human)).